The primary structure comprises 254 residues: Isoprenyl transferase (254 aa).

Residue Asp-12 is part of the active site. A Mg(2+)-binding site is contributed by Asp-12. Substrate is bound by residues Gly-13–Arg-16, Trp-17, Arg-25, His-29, and Ser-57–Glu-59. Asn-60 serves as the catalytic Proton acceptor. Substrate contacts are provided by residues Trp-61, Arg-63, Arg-180, and Arg-186–Ser-188. Glu-199 provides a ligand contact to Mg(2+).

The protein belongs to the UPP synthase family. Homodimer. It depends on Mg(2+) as a cofactor.

In terms of biological role, catalyzes the condensation of isopentenyl diphosphate (IPP) with allylic pyrophosphates generating different type of terpenoids. The protein is Isoprenyl transferase of Brucella suis biovar 1 (strain 1330).